We begin with the raw amino-acid sequence, 227 residues long: Cytidylate kinase (227 aa).

12–20 contributes to the ATP binding site; the sequence is GPGGAGKGT.

It belongs to the cytidylate kinase family. Type 1 subfamily.

It is found in the cytoplasm. It carries out the reaction CMP + ATP = CDP + ADP. The catalysed reaction is dCMP + ATP = dCDP + ADP. The protein is Cytidylate kinase of Klebsiella pneumoniae (strain 342).